The sequence spans 224 residues: Imidazoleglycerol-phosphate dehydratase (224 aa).

Belongs to the imidazoleglycerol-phosphate dehydratase family.

The enzyme catalyses D-erythro-1-(imidazol-4-yl)glycerol 3-phosphate = 3-(imidazol-4-yl)-2-oxopropyl phosphate + H2O. It functions in the pathway amino-acid biosynthesis; L-histidine biosynthesis; L-histidine from 5-phospho-alpha-D-ribose 1-diphosphate: step 6/9. The protein is Imidazoleglycerol-phosphate dehydratase (HIS3) of Cyberlindnera jadinii (Torula yeast).